Here is a 435-residue protein sequence, read N- to C-terminus: Trigger factor (435 aa).

The PPIase FKBP-type domain occupies 163–248 (GDRVTIDFEG…LTRIEAQNLP (86 aa)).

This sequence belongs to the FKBP-type PPIase family. Tig subfamily.

Its subcellular location is the cytoplasm. The catalysed reaction is [protein]-peptidylproline (omega=180) = [protein]-peptidylproline (omega=0). Involved in protein export. Acts as a chaperone by maintaining the newly synthesized protein in an open conformation. Functions as a peptidyl-prolyl cis-trans isomerase. This chain is Trigger factor, found in Leptothrix cholodnii (strain ATCC 51168 / LMG 8142 / SP-6) (Leptothrix discophora (strain SP-6)).